Reading from the N-terminus, the 126-residue chain is Holo-[acyl-carrier-protein] synthase (126 aa).

Mg(2+)-binding residues include Asp8 and Glu57.

Belongs to the P-Pant transferase superfamily. AcpS family. The cofactor is Mg(2+).

It localises to the cytoplasm. It carries out the reaction apo-[ACP] + CoA = holo-[ACP] + adenosine 3',5'-bisphosphate + H(+). Its function is as follows. Transfers the 4'-phosphopantetheine moiety from coenzyme A to a Ser of acyl-carrier-protein. This chain is Holo-[acyl-carrier-protein] synthase, found in Vibrio cholerae serotype O1 (strain ATCC 39541 / Classical Ogawa 395 / O395).